The sequence spans 397 residues: Enoyl-[acyl-carrier-protein] reductase [NADH] (397 aa).

NAD(+) is bound by residues Gly-48–Tyr-53, Phe-74–Glu-75, Asp-111–Ala-112, and Val-139–Ala-140. Tyr-225 lines the substrate pocket. Tyr-235 functions as the Proton donor in the catalytic mechanism. Residues Lys-244 and Val-273–Thr-275 contribute to the NAD(+) site.

This sequence belongs to the TER reductase family. As to quaternary structure, monomer.

The catalysed reaction is a 2,3-saturated acyl-[ACP] + NAD(+) = a (2E)-enoyl-[ACP] + NADH + H(+). It functions in the pathway lipid metabolism; fatty acid biosynthesis. Functionally, involved in the final reduction of the elongation cycle of fatty acid synthesis (FAS II). Catalyzes the reduction of a carbon-carbon double bond in an enoyl moiety that is covalently linked to an acyl carrier protein (ACP). In Burkholderia thailandensis (strain ATCC 700388 / DSM 13276 / CCUG 48851 / CIP 106301 / E264), this protein is Enoyl-[acyl-carrier-protein] reductase [NADH].